Reading from the N-terminus, the 110-residue chain is Body wall hemoglobin (110 aa).

The Globin domain maps to 2-110 (VNWAAVVDAF…GAVDAIISHF (109 aa)). Residue His70 participates in heme binding.

The protein belongs to the globin family. Homotetramer.

This is Body wall hemoglobin from Cerebratulus lacteus (Milky ribbon worm).